The chain runs to 104 residues: Inclusion membrane protein F (104 aa).

2 helical membrane-spanning segments follow: residues 39-59 (LVVA…SLVA) and 70-90 (LAVL…VLFI).

The protein localises to the secreted. It is found in the host vacuole. Its subcellular location is the host pathogen-containing vacuole. The protein resides in the host pathogen-containing vacuole membrane. Inclusion membrane protein probably involved in early modification events of the chlamydial inclusion. This Chlamydia trachomatis serovar L2 (strain ATCC VR-902B / DSM 19102 / 434/Bu) protein is Inclusion membrane protein F.